Consider the following 376-residue polypeptide: Chaperone protein DnaJ (376 aa).

The J domain occupies 5–70 (DYYEVLGVAK…QKRAAYDQYG (66 aa)). The CR-type zinc finger occupies 136–214 (GYDTQIRVPS…CHGSGKVKET (79 aa)). 8 residues coordinate Zn(2+): Cys149, Cys152, Cys166, Cys169, Cys188, Cys191, Cys202, and Cys205. 4 CXXCXGXG motif repeats span residues 149-156 (CEVCHGSG), 166-173 (CPTCHGQG), 188-195 (CPKCHGTG), and 202-209 (CAHCHGSG).

Belongs to the DnaJ family. In terms of assembly, homodimer. Requires Zn(2+) as cofactor.

The protein resides in the cytoplasm. Functionally, participates actively in the response to hyperosmotic and heat shock by preventing the aggregation of stress-denatured proteins and by disaggregating proteins, also in an autonomous, DnaK-independent fashion. Unfolded proteins bind initially to DnaJ; upon interaction with the DnaJ-bound protein, DnaK hydrolyzes its bound ATP, resulting in the formation of a stable complex. GrpE releases ADP from DnaK; ATP binding to DnaK triggers the release of the substrate protein, thus completing the reaction cycle. Several rounds of ATP-dependent interactions between DnaJ, DnaK and GrpE are required for fully efficient folding. Also involved, together with DnaK and GrpE, in the DNA replication of plasmids through activation of initiation proteins. The chain is Chaperone protein DnaJ from Burkholderia multivorans (strain ATCC 17616 / 249).